The sequence spans 312 residues: tRNA dimethylallyltransferase (312 aa).

G17–S24 lines the ATP pocket. T19 to S24 contributes to the substrate binding site.

This sequence belongs to the IPP transferase family. As to quaternary structure, monomer. Mg(2+) serves as cofactor.

The enzyme catalyses adenosine(37) in tRNA + dimethylallyl diphosphate = N(6)-dimethylallyladenosine(37) in tRNA + diphosphate. Functionally, catalyzes the transfer of a dimethylallyl group onto the adenine at position 37 in tRNAs that read codons beginning with uridine, leading to the formation of N6-(dimethylallyl)adenosine (i(6)A). The chain is tRNA dimethylallyltransferase from Zymomonas mobilis subsp. mobilis (strain ATCC 31821 / ZM4 / CP4).